We begin with the raw amino-acid sequence, 836 residues long: DNA gyrase subunit A (836 aa).

Residues 34-500 (LPDARDGLKP…AGDVRDIEDI (467 aa)) form the Topo IIA-type catalytic domain. The O-(5'-phospho-DNA)-tyrosine intermediate role is filled by tyrosine 122. Positions 527–533 (QKRGGQG) match the GyrA-box motif.

It belongs to the type II topoisomerase GyrA/ParC subunit family. In terms of assembly, heterotetramer, composed of two GyrA and two GyrB chains. In the heterotetramer, GyrA contains the active site tyrosine that forms a transient covalent intermediate with DNA, while GyrB binds cofactors and catalyzes ATP hydrolysis.

The protein localises to the cytoplasm. It catalyses the reaction ATP-dependent breakage, passage and rejoining of double-stranded DNA.. Its function is as follows. A type II topoisomerase that negatively supercoils closed circular double-stranded (ds) DNA in an ATP-dependent manner to modulate DNA topology and maintain chromosomes in an underwound state. Negative supercoiling favors strand separation, and DNA replication, transcription, recombination and repair, all of which involve strand separation. Also able to catalyze the interconversion of other topological isomers of dsDNA rings, including catenanes and knotted rings. Type II topoisomerases break and join 2 DNA strands simultaneously in an ATP-dependent manner. This chain is DNA gyrase subunit A, found in Chlamydia trachomatis serovar D (strain ATCC VR-885 / DSM 19411 / UW-3/Cx).